A 390-amino-acid chain; its full sequence is Phosphopentomutase (390 aa).

Residues Asp10, Asp284, His289, Asp325, His326, and His337 each contribute to the Mn(2+) site.

This sequence belongs to the phosphopentomutase family. The cofactor is Mn(2+).

The protein resides in the cytoplasm. The enzyme catalyses 2-deoxy-alpha-D-ribose 1-phosphate = 2-deoxy-D-ribose 5-phosphate. It catalyses the reaction alpha-D-ribose 1-phosphate = D-ribose 5-phosphate. The protein operates within carbohydrate degradation; 2-deoxy-D-ribose 1-phosphate degradation; D-glyceraldehyde 3-phosphate and acetaldehyde from 2-deoxy-alpha-D-ribose 1-phosphate: step 1/2. Its function is as follows. Isomerase that catalyzes the conversion of deoxy-ribose 1-phosphate (dRib-1-P) and ribose 1-phosphate (Rib-1-P) to deoxy-ribose 5-phosphate (dRib-5-P) and ribose 5-phosphate (Rib-5-P), respectively. The sequence is that of Phosphopentomutase from Clostridioides difficile (strain 630) (Peptoclostridium difficile).